The chain runs to 429 residues: Tol-Pal system protein TolB (429 aa).

The signal sequence occupies residues 1–21 (MKPVFKMLLSLLILWTSLLHA).

Belongs to the TolB family. In terms of assembly, the Tol-Pal system is composed of five core proteins: the inner membrane proteins TolA, TolQ and TolR, the periplasmic protein TolB and the outer membrane protein Pal. They form a network linking the inner and outer membranes and the peptidoglycan layer.

The protein localises to the periplasm. Its function is as follows. Part of the Tol-Pal system, which plays a role in outer membrane invagination during cell division and is important for maintaining outer membrane integrity. TolB occupies a key intermediary position in the Tol-Pal system because it communicates directly with both membrane-embedded components, Pal in the outer membrane and TolA in the inner membrane. The protein is Tol-Pal system protein TolB of Hamiltonella defensa subsp. Acyrthosiphon pisum (strain 5AT).